A 243-amino-acid chain; its full sequence is Carboxy-S-adenosyl-L-methionine synthase (243 aa).

S-adenosyl-L-methionine is bound by residues Tyr-35, 68 to 70 (GCS), 92 to 93 (DN), and Arg-199.

Belongs to the class I-like SAM-binding methyltransferase superfamily. Cx-SAM synthase family. Homodimer.

The enzyme catalyses prephenate + S-adenosyl-L-methionine = carboxy-S-adenosyl-L-methionine + 3-phenylpyruvate + H2O. Functionally, catalyzes the conversion of S-adenosyl-L-methionine (SAM) to carboxy-S-adenosyl-L-methionine (Cx-SAM). In Helicobacter pylori (strain P12), this protein is Carboxy-S-adenosyl-L-methionine synthase.